A 59-amino-acid chain; its full sequence is Gonadotropin-releasing hormone receptor (59 aa).

At 1-2 the chain is on the cytoplasmic side; that stretch reads VA. The helical transmembrane segment at 3–23 threads the bilayer; it reads FATSFTVCWTPYYVLGIWYWF. The Extracellular portion of the chain corresponds to 24 to 37; it reads DPEMLNRVSDPVNH. A helical membrane pass occupies residues 38-58; the sequence is FFFLFAFLNPCFDPLIYGYFS. Leucine 59 is a topological domain (cytoplasmic).

The protein belongs to the G-protein coupled receptor 1 family.

The protein resides in the cell membrane. In terms of biological role, receptor for gonadotropin releasing hormone (GnRH) that mediates the action of GnRH to stimulate the secretion of the gonadotropic hormones luteinizing hormone (LH) and follicle-stimulating hormone (FSH). This receptor mediates its action by association with G-proteins that activate a phosphatidylinositol-calcium second messenger system. The polypeptide is Gonadotropin-releasing hormone receptor (GNRHR) (Macaca mulatta (Rhesus macaque)).